The primary structure comprises 79 residues: Small ribosomal subunit protein bS16 (79 aa).

It belongs to the bacterial ribosomal protein bS16 family.

In Nitratidesulfovibrio vulgaris (strain DSM 19637 / Miyazaki F) (Desulfovibrio vulgaris), this protein is Small ribosomal subunit protein bS16.